A 260-amino-acid polypeptide reads, in one-letter code: Hydroxyethylthiazole kinase (260 aa).

A substrate-binding site is contributed by methionine 38. Residues lysine 114 and serine 161 each contribute to the ATP site. Glycine 188 provides a ligand contact to substrate.

This sequence belongs to the Thz kinase family. It depends on Mg(2+) as a cofactor.

The enzyme catalyses 5-(2-hydroxyethyl)-4-methylthiazole + ATP = 4-methyl-5-(2-phosphooxyethyl)-thiazole + ADP + H(+). The protein operates within cofactor biosynthesis; thiamine diphosphate biosynthesis; 4-methyl-5-(2-phosphoethyl)-thiazole from 5-(2-hydroxyethyl)-4-methylthiazole: step 1/1. Catalyzes the phosphorylation of the hydroxyl group of 4-methyl-5-beta-hydroxyethylthiazole (THZ). The sequence is that of Hydroxyethylthiazole kinase from Campylobacter lari (strain RM2100 / D67 / ATCC BAA-1060).